Reading from the N-terminus, the 357-residue chain is Cyclic AMP-responsive element-binding protein 5 (357 aa).

Positions 114 to 239 (RQDQTPHHHL…FLERNRAAAT (126 aa)) are disordered. Basic residues-rich tracts occupy residues 120 to 129 (HHHLHSHPHQ) and 138 to 175 (PYPHQHQHPAHHPHPQPHHQQNHPHHHSHSHLHAHPAH). The span at 186–195 (TGNQAQVSPA) shows a compositional bias: polar residues. Over residues 196–206 (TQQMQPTQTIQ) the composition is skewed to low complexity. Residues 218–235 (VVDEDPDERRRKFLERNR) are compositionally biased toward basic and acidic residues. One can recognise a bZIP domain in the interval 224-287 (DERRRKFLER…AQLKQLLLTH (64 aa)). The segment at 226–246 (RRRKFLERNRAAATRCRQKRK) is basic motif. The tract at residues 252-280 (LEKKAEELTQTNMQLQNEVSMLKNEVAQL) is leucine-zipper. A disordered region spans residues 298–318 (ESQGYLSPESSPPASPVPACS).

The protein belongs to the bZIP family. In terms of assembly, binds DNA as a homodimer or as a heterodimer with JUN or ATF2/CREBP1.

It is found in the nucleus. Binds to the cAMP response element and activates transcription. The chain is Cyclic AMP-responsive element-binding protein 5 (Creb5) from Mus musculus (Mouse).